Here is a 238-residue protein sequence, read N- to C-terminus: Probable transcriptional regulatory protein CPn_0573/CP_0176/CPj0573/CpB0595 (238 aa).

Residues 1-20 (MAGHSKWANTKHRKERADHK) form a disordered region. Positions 9–20 (NTKHRKERADHK) are enriched in basic residues.

The protein belongs to the TACO1 family.

Its subcellular location is the cytoplasm. This chain is Probable transcriptional regulatory protein CPn_0573/CP_0176/CPj0573/CpB0595, found in Chlamydia pneumoniae (Chlamydophila pneumoniae).